The primary structure comprises 425 residues: MATAEVLNIGKKLYEGKTKEVYELLDSPGKVLLQSKDQITAGNAARKNHLEGKAAISNKITSCIFQLLQEAGIKTAFTRKCGETAFIAPQCEMIPIEWVCRRIATGSFLKRNPGVKEGYKFYPPKVELFFKDDANNDPQWSEEQLIAAKFCFAGLLIGQTEVDIMSHATQAIFEILEKSWLPQNCTLVDMKIEFGVDVTTKEIVLADVIDNDSWRLWPSGDRSQQKDKQSYRDLKEVTPEGLQMVKKNFEWVAERVELLLKSESQCRVVVLMGSTSDLGHCEKIKKACGNFGIPCELRVTSAHKGPDETLRIKAEYEGDGIPTVFVAVAGRSNGLGPVMSGNTAYPVISCPPLTPDWGVQDVWSSLRLPSGLGCSTVLSPEGSAQFAAQIFGLSNHLVWSKLRASILNTWISLKQADKKIRECNL.

At A2 the chain carries N-acetylalanine. The segment at A2–L260 is SAICAR synthetase domain. Y22 is subject to Phosphotyrosine. A Phosphoserine modification is found at S27. N6-acetyllysine is present on K36. S107 carries the phosphoserine modification. T238 carries the phosphothreonine modification. An N6-acetyllysine modification is found at K247. Positions K261–C266 are linker. The AIR carboxylase domain stretch occupies residues R267 to L425. At S274 the chain carries Phosphoserine. Position 332 (S332) interacts with CO2.

It in the N-terminal section; belongs to the SAICAR synthetase family. In the C-terminal section; belongs to the AIR carboxylase family. Class II subfamily. Homooctamer.

It catalyses the reaction 5-amino-1-(5-phospho-D-ribosyl)imidazole-4-carboxylate + L-aspartate + ATP = (2S)-2-[5-amino-1-(5-phospho-beta-D-ribosyl)imidazole-4-carboxamido]succinate + ADP + phosphate + 2 H(+). The enzyme catalyses 5-amino-1-(5-phospho-D-ribosyl)imidazole-4-carboxylate + H(+) = 5-amino-1-(5-phospho-beta-D-ribosyl)imidazole + CO2. Its pathway is purine metabolism; IMP biosynthesis via de novo pathway; 5-amino-1-(5-phospho-D-ribosyl)imidazole-4-carboxamide from 5-amino-1-(5-phospho-D-ribosyl)imidazole-4-carboxylate: step 1/2. The protein operates within purine metabolism; IMP biosynthesis via de novo pathway; 5-amino-1-(5-phospho-D-ribosyl)imidazole-4-carboxylate from 5-amino-1-(5-phospho-D-ribosyl)imidazole (carboxylase route): step 1/1. In terms of biological role, bifunctional phosphoribosylaminoimidazole carboxylase and phosphoribosylaminoimidazole succinocarboxamide synthetase catalyzing two reactions of the de novo purine biosynthetic pathway. This chain is Bifunctional phosphoribosylaminoimidazole carboxylase/phosphoribosylaminoimidazole succinocarboxamide synthetase, found in Homo sapiens (Human).